The following is a 586-amino-acid chain: Asparagine synthetase [glutamine-hydrolyzing] (586 aa).

C2 functions as the For GATase activity in the catalytic mechanism. In terms of domain architecture, Glutamine amidotransferase type-2 spans 2 to 185 (CGILAVLGCS…PGHLYSSKSG (184 aa)). L-glutamine-binding positions include 50-54 (RLAII), 75-77 (NGE), and D98. The Asparagine synthetase domain maps to 194–517 (PPWFNESVPS…PQNSARLTVP (324 aa)). Residues L232, V268, and 342–343 (SG) each bind ATP.

Belongs to the asparagine synthetase family.

It catalyses the reaction L-aspartate + L-glutamine + ATP + H2O = L-asparagine + L-glutamate + AMP + diphosphate + H(+). It functions in the pathway amino-acid biosynthesis; L-asparagine biosynthesis; L-asparagine from L-aspartate (L-Gln route): step 1/1. This chain is Asparagine synthetase [glutamine-hydrolyzing], found in Brassica oleracea (Wild cabbage).